We begin with the raw amino-acid sequence, 493 residues long: Glycerol kinase (493 aa).

Residue Thr11 coordinates ADP. ATP contacts are provided by Thr11, Thr12, and Ser13. Thr11 contacts sn-glycerol 3-phosphate. Residue Arg15 participates in ADP binding. Positions 80, 81, 132, and 241 each coordinate sn-glycerol 3-phosphate. Glycerol contacts are provided by Arg80, Glu81, Tyr132, Asp241, and Gln242. Thr263 and Gly306 together coordinate ADP. Positions 263, 306, 310, and 408 each coordinate ATP. Gly408 is an ADP binding site.

The protein belongs to the FGGY kinase family.

The enzyme catalyses glycerol + ATP = sn-glycerol 3-phosphate + ADP + H(+). Its pathway is polyol metabolism; glycerol degradation via glycerol kinase pathway; sn-glycerol 3-phosphate from glycerol: step 1/1. Its activity is regulated as follows. Inhibited by fructose 1,6-bisphosphate (FBP). Key enzyme in the regulation of glycerol uptake and metabolism. Catalyzes the phosphorylation of glycerol to yield sn-glycerol 3-phosphate. This Cereibacter sphaeroides (strain ATCC 17029 / ATH 2.4.9) (Rhodobacter sphaeroides) protein is Glycerol kinase.